The chain runs to 573 residues: Solute carrier family 41 member 2 (573 aa).

The Extracellular segment spans residues Met-1–Gln-162. The helical transmembrane segment at Ile-163 to Ile-183 threads the bilayer. Topologically, residues Val-184–Glu-195 are cytoplasmic. Residues Val-196–Ser-216 traverse the membrane as a helical segment. Over Arg-217–Gln-245 the chain is Extracellular. Residues Val-246–Pro-266 traverse the membrane as a helical segment. Topologically, residues Glu-267–Ser-282 are cytoplasmic. Residues Val-283–Gly-303 traverse the membrane as a helical segment. Over Ser-304–Asn-313 the chain is Extracellular. A helical membrane pass occupies residues Val-314 to Ile-334. Residues Ser-335–Tyr-347 lie on the Cytoplasmic side of the membrane. A helical membrane pass occupies residues Val-348–Ala-368. Residues Lys-369–Val-376 are Extracellular-facing. The chain crosses the membrane as a helical span at residues Leu-377–Ile-397. Over Leu-398 to Asn-406 the chain is Cytoplasmic. Residues Leu-407–Ile-427 traverse the membrane as a helical segment. Topologically, residues Gln-428 to Ala-469 are extracellular. A helical membrane pass occupies residues Gln-470 to Met-490. At Lys-491–Pro-499 the chain is on the cytoplasmic side. A helical transmembrane segment spans residues Ile-500–Ala-520. Topologically, residues Asp-521 to Thr-543 are extracellular. A helical membrane pass occupies residues Ala-544–Ile-564. The Cytoplasmic segment spans residues Gly-565–Asp-573.

Belongs to the SLC41A transporter family.

The protein localises to the cell membrane. It catalyses the reaction Mg(2+)(in) = Mg(2+)(out). It carries out the reaction Mn(2+)(in) = Mn(2+)(out). The catalysed reaction is Co(2+)(in) = Co(2+)(out). The enzyme catalyses Ni(2+)(in) = Ni(2+)(out). It catalyses the reaction Fe(2+)(in) = Fe(2+)(out). Functionally, acts as a plasma-membrane magnesium transporter. Can also mediate the transport of other divalent metal cations in an order of Ba(2+) &gt; Ni(2+) &gt; Co(2+) &gt; Fe(2+) &gt; Mn(2+). This Gallus gallus (Chicken) protein is Solute carrier family 41 member 2 (SLC41A2).